Here is a 393-residue protein sequence, read N- to C-terminus: CCA-adding enzyme (393 aa).

ATP-binding residues include Gly27 and Arg30. Gly27 and Arg30 together coordinate CTP. Mg(2+) is bound by residues Asp40 and Asp42. ATP-binding residues include Arg111, Asp154, Arg157, Arg160, and Arg163. 5 residues coordinate CTP: Arg111, Asp154, Arg157, Arg160, and Arg163.

It belongs to the tRNA nucleotidyltransferase/poly(A) polymerase family. Bacterial CCA-adding enzyme type 3 subfamily. In terms of assembly, homodimer. Requires Mg(2+) as cofactor.

It carries out the reaction a tRNA precursor + 2 CTP + ATP = a tRNA with a 3' CCA end + 3 diphosphate. The enzyme catalyses a tRNA with a 3' CCA end + 2 CTP + ATP = a tRNA with a 3' CCACCA end + 3 diphosphate. Catalyzes the addition and repair of the essential 3'-terminal CCA sequence in tRNAs without using a nucleic acid template. Adds these three nucleotides in the order of C, C, and A to the tRNA nucleotide-73, using CTP and ATP as substrates and producing inorganic pyrophosphate. tRNA 3'-terminal CCA addition is required both for tRNA processing and repair. Also involved in tRNA surveillance by mediating tandem CCA addition to generate a CCACCA at the 3' terminus of unstable tRNAs. While stable tRNAs receive only 3'-terminal CCA, unstable tRNAs are marked with CCACCA and rapidly degraded. This Listeria monocytogenes serotype 4a (strain HCC23) protein is CCA-adding enzyme.